Here is a 144-residue protein sequence, read N- to C-terminus: ATP synthase epsilon chain (144 aa).

Belongs to the ATPase epsilon chain family. As to quaternary structure, F-type ATPases have 2 components, CF(1) - the catalytic core - and CF(0) - the membrane proton channel. CF(1) has five subunits: alpha(3), beta(3), gamma(1), delta(1), epsilon(1). CF(0) has three main subunits: a, b and c.

The protein resides in the cell inner membrane. Functionally, produces ATP from ADP in the presence of a proton gradient across the membrane. This Hydrogenovibrio crunogenus (strain DSM 25203 / XCL-2) (Thiomicrospira crunogena) protein is ATP synthase epsilon chain.